A 306-amino-acid chain; its full sequence is Choline-binding protein (306 aa).

The first 22 residues, 1–22 (MKRKYLKLMIGLALAATLTLSG), serve as a signal peptide directing secretion. Residue C23 is the site of N-palmitoyl cysteine attachment. C23 carries the S-diacylglycerol cysteine lipid modification.

Belongs to the OsmX family.

The protein resides in the cell membrane. Its function is as follows. Member of a high affinity multicomponent binding-protein-dependent transport system for choline. This is Choline-binding protein (opuBC) from Bacillus subtilis (strain 168).